The chain runs to 830 residues: Receptor-like protein kinase HERK 1 (830 aa).

The signal sequence occupies residues 1-24 (MGIEKFETFILISTISILLCICHG). Residues 25-405 (FTPVDNYLIN…SSSSSKSNLG (381 aa)) are Extracellular-facing. N-linked (GlcNAc...) asparagine glycosylation is found at Asn40, Asn146, Asn217, Asn280, and Asn381. A helical transmembrane segment spans residues 406-426 (LIVGSAIGSLLAVVFLGSCFV). Residues 427 to 830 (LYKKRKRGQD…FSQLVKSEGR (404 aa)) lie on the Cytoplasmic side of the membrane. The 274-residue stretch at 485-758 (FDESRNIGVG…GDVLWNLEYA (274 aa)) folds into the Protein kinase domain. ATP contacts are provided by residues 491 to 499 (IGVGGFGKV) and Lys513. The active-site Proton acceptor is the Asp609.

This sequence belongs to the protein kinase superfamily. Ser/Thr protein kinase family. Post-translationally, autophosphorylated. As to expression, expressed in most vegetative tissues, including leaves, stems and roots, especially in cell elongation regions.

The protein localises to the cell membrane. Receptor-like protein kinase required for cell elongation during vegetative growth, mostly in a brassinosteroid-(BR-) independent manner. This is Receptor-like protein kinase HERK 1 (HERK1) from Arabidopsis thaliana (Mouse-ear cress).